The sequence spans 93 residues: UPF0297 protein PEPE_1262 (93 aa).

The protein belongs to the UPF0297 family.

This is UPF0297 protein PEPE_1262 from Pediococcus pentosaceus (strain ATCC 25745 / CCUG 21536 / LMG 10740 / 183-1w).